Consider the following 315-residue polypeptide: ATP synthase gamma chain (315 aa).

The protein belongs to the ATPase gamma chain family. F-type ATPases have 2 components, CF(1) - the catalytic core - and CF(0) - the membrane proton channel. CF(1) has five subunits: alpha(3), beta(3), gamma(1), delta(1), epsilon(1). CF(0) has three main subunits: a, b and c.

It is found in the cellular thylakoid membrane. Its function is as follows. Produces ATP from ADP in the presence of a proton gradient across the membrane. The gamma chain is believed to be important in regulating ATPase activity and the flow of protons through the CF(0) complex. This Nostoc sp. (strain PCC 7120 / SAG 25.82 / UTEX 2576) protein is ATP synthase gamma chain.